A 684-amino-acid chain; its full sequence is Probable potassium transport system protein Kup (684 aa).

12 helical membrane-spanning segments follow: residues 19-39 (ALLV…LYVM), 61-81 (VSLI…LIAL), 104-124 (WLVL…MLTP), 151-171 (QVIW…RFGT), 177-197 (AFGP…FIAL), 223-243 (MGLF…ALYS), 255-275 (LSWP…AVWL), 303-323 (LGAI…LISG), 352-372 (LYIP…IGYF), 381-401 (AYGL…YQYL), 407-427 (PAVI…VFFI), and 433-453 (FLHG…VMYV).

This sequence belongs to the HAK/KUP transporter (TC 2.A.72) family.

The protein resides in the cell membrane. The enzyme catalyses K(+)(in) + H(+)(in) = K(+)(out) + H(+)(out). Its function is as follows. Transport of potassium into the cell. Likely operates as a K(+):H(+) symporter. This Lacticaseibacillus casei (strain BL23) (Lactobacillus casei) protein is Probable potassium transport system protein Kup.